Here is a 495-residue protein sequence, read N- to C-terminus: Ribosome biogenesis protein YTM1 (495 aa).

Residues 15–97 (VKVIFTTTEP…ETTLTLQYVR (83 aa)) form a ubiquitin-like (UBL) domain region. WD repeat units follow at residues 129-168 (WSSA…IATS), 175-213 (GHTA…HFTG), 223-262 (GHTG…APEP), 264-295 (ASLL…LWSI), 296-337 (HTAP…STLT), 386-426 (GHAN…PATK), and 458-495 (GDGC…TEQK).

It belongs to the WD repeat WDR12/YTM1 family. In terms of assembly, component of the NOP7 complex, composed of ERB1, NOP7 and YTM1. The complex is held together by ERB1, which interacts with NOP7 via its N-terminal domain and with YTM1 via a high-affinity interaction between the seven-bladed beta-propeller domains of the 2 proteins. The NOP7 complex associates with the 66S pre-ribosome. Interacts (via UBL domain) with MDN1 (via VWFA/MIDAS domain).

Its subcellular location is the nucleus. The protein resides in the nucleolus. It is found in the nucleoplasm. Its function is as follows. Component of the NOP7 complex, which is required for maturation of the 25S and 5.8S ribosomal RNAs and formation of the 60S ribosome. This chain is Ribosome biogenesis protein YTM1, found in Chaetomium thermophilum (strain DSM 1495 / CBS 144.50 / IMI 039719) (Thermochaetoides thermophila).